The following is a 698-amino-acid chain: Dual trans-enoyl reductase/FAD-dependent monooxygenase tazHJ (698 aa).

NADP(+) is bound by residues 54–57, 78–81, Tyr96, and 279–280; these read STAT, SPRH, and IA. Residues Glu299, Gly312, and Arg372 each coordinate FAD. Residue Arg455 is part of the active site. Asp571 and Ala584 together coordinate FAD.

The protein in the N-terminal section; belongs to the zinc-containing alcohol dehydrogenase family. It in the C-terminal section; belongs to the paxM FAD-dependent monooxygenase family.

It participates in secondary metabolite biosynthesis. In terms of biological role, dual trans-enoyl reductase/FAD-dependent monooxygenase; part of the gene cluster that mediates the biosynthesis of azaterrilone A and other azaphilones, a class of fungal metabolites characterized by a highly oxygenated pyrano-quinone bicyclic core and exhibiting a broad range of bioactivities. The first step of the pathway begins with the non-reducing polyketide synthase tazA that assembles one acetyl-CoA starter unit, five malonyl-CoA units, and catalyzes a series of Claisen condensations, methylation, PT-mediated cyclization, and finally releases the first hexaketide precursor through the R-domain. The tazA product then undergoes reduction on its terminal ketone and the following pyran-ring formation by yet undetermined enzyme(s). Dehydration and enoyl reduction, possibly involving the trans-enoyl reductase tazE leads to the next intermediate. TazD is predicted as an acetyltransferase and might catalyze the acetylation steps leading to the synthesis of azaterrilone A. Azaterrilone A is not the final product of the taz pathway and both the highly reducing polyketide synthase tazB and the dual enzyme tazHJ catalyze late steps of the pathway, leading to the production of the 2 final stereoisomers that contain additional polyketide modification whose structures have still to be determined. The polypeptide is Dual trans-enoyl reductase/FAD-dependent monooxygenase tazHJ (Aspergillus terreus (strain NIH 2624 / FGSC A1156)).